We begin with the raw amino-acid sequence, 581 residues long: MKTLLTILTVGSLAAHTTVDTSGLLQHVKFQSSNFENILTWDGGPASTSDTVYSVEYKKYGERKWLAKAGCQRITQKFCNLTMETRNHTEFYYAKVTAVSAGGPPVTKMTDRFSSLQHTTIKPPDVTCIPKVRSIQMLVHPTLTPVLSEDGHQLTLEEIFHDLFYRLELHVNHTYQMHLEGKQREYEFLGLTPDTEFLGSITILTPILSKESAPYVCRVKTLPDRTWAYSFSGAVLFSMGFLVGLLCYLGYKYITKPPVPPNSLNVQRVLTFQPLRFIQEHVLIPVLDLSGPSSLPQPIQYSQVVVSGPREPPGAVWRQSLSDLTYVGQSDVSILQPTNVPAQQTLSPPSYAPKAVPEVQPPSYAPQVASDAKALFYSPQQGMKTRPATYDPQDILDSCPASYAVCVEDSGKDSTPGILSTPKYLKTKGQLQEDTLVRSCLPGDLSLQKVTSLGEGETQRPKSLPSPLGFCTDRGPDLHTLRSEEPETPRYLKGALSLLSSVQIEGHPVSLPLHVHSVSCSPSDEGPSPWGLLDSLVCPKDEGPAVETEAMCPSAAASELEQSTELDSLFKGLALTVQWES.

An N-terminal signal peptide occupies residues 1–15 (MKTLLTILTVGSLAA). Residues 16–230 (HTTVDTSGLL…TLPDRTWAYS (215 aa)) are Extracellular-facing. Fibronectin type-III domains follow at residues 18–115 (TVDT…RFSS) and 141–221 (PTLT…RVKT). Residues Cys71 and Cys79 are joined by a disulfide bond. N-linked (GlcNAc...) asparagine glycosylation is found at Asn80 and Asn172. Cys128 and Cys217 form a disulfide bridge. The chain crosses the membrane as a helical span at residues 231-251 (FSGAVLFSMGFLVGLLCYLGY). Topologically, residues 252–581 (KYITKPPVPP…GLALTVQWES (330 aa)) are cytoplasmic. Positions 343–364 (QQTLSPPSYAPKAVPEVQPPSY) are disordered. Ser410 and Ser414 each carry phosphoserine; by GSK3-beta. Residue Lys449 forms a Glycyl lysine isopeptide (Lys-Gly) (interchain with G-Cter in ubiquitin) linkage.

This sequence belongs to the type II cytokine receptor family. In terms of assembly, heterodimer with IL10RB and with IL20RB. In terms of processing, phosphorylated by GSK3-BETA and MAPK; phosphorylation by GSK3-BETA stabilizes IL22RA1 by preventing its proteasomal degradation. In terms of tissue distribution, expressed in kidney, liver and lung.

The protein localises to the cell membrane. Functionally, component of the receptor for IL20, IL22 and IL24. Component of IL22 receptor formed by IL22RA1 and IL10RB enabling IL22 signaling via JAK/STAT pathways. IL22 also induces activation of MAPK1/MAPK3 and Akt kinases pathways. Component of one of the receptor for IL20 and IL24 formed by IL22RA1 and IL20RB also signaling through STATs activation. Mediates IL24 antiangiogenic activity as well as IL24 inhibitory effect on endothelial cell tube formation and differentiation. This is Interleukin-22 receptor subunit alpha-1 (Il22ra1) from Mus musculus (Mouse).